A 442-amino-acid chain; its full sequence is PTS system oligo-beta-mannoside-specific EIIC component (442 aa).

The PTS EIIC type-3 domain occupies I5–F411. Helical transmembrane passes span A28 to L48, F67 to G87, E97 to I117, G138 to V157, F177 to V197, M205 to I225, L228 to I248, T286 to M306, P329 to A349, L365 to I385, and I391 to F411.

It localises to the cell membrane. Functionally, the phosphoenolpyruvate-dependent sugar phosphotransferase system (sugar PTS), a major carbohydrate active transport system, catalyzes the phosphorylation of incoming sugar substrates concomitantly with their translocation across the cell membrane. The enzyme II GmuABC PTS system is involved in the transport of oligo-glucomannans such as cellobiose or mannobiose. The chain is PTS system oligo-beta-mannoside-specific EIIC component from Bacillus subtilis (strain 168).